We begin with the raw amino-acid sequence, 1627 residues long: DNA topoisomerase 2-beta (1627 aa).

ATP contacts are provided by residues N117, N146, 174–176 (SSN), and 187–194 (GRNGYGAK). The segment at 368–370 (KKK) is interaction with DNA. 402 to 404 (QTK) is a binding site for ATP. Residues 481-598 (CTLILTEGDS…SLLKHGFLEE (118 aa)) form the Toprim domain. Positions 487, 567, and 569 each coordinate Mg(2+). In terms of domain architecture, Topo IIA-type catalytic spans 741-1194 (IPSLVDGLKP…SASDLWKEDL (454 aa)). Y831 (O-(5'-phospho-DNA)-tyrosine intermediate) is an active-site residue. An interaction with DNA region spans residues 1016–1025 (KLQTSLTCNS). Disordered regions lie at residues 1115-1144 (AWKE…GSTS), 1224-1248 (KVGK…RRIV), 1283-1365 (EFGG…DSLL), and 1378-1627 (DFSK…DMFN). The segment covering 1131 to 1144 (NANDDASSASGSTS) has biased composition (low complexity). Over residues 1296 to 1305 (TVNTAASGTK) the composition is skewed to polar residues. Basic and acidic residues predominate over residues 1339-1349 (PWSDDESKSES). Acidic residues-rich tracts occupy residues 1381 to 1392 (KEEDDAHDDDDA) and 1412 to 1428 (REDE…DEYD). Composition is skewed to basic and acidic residues over residues 1436–1448 (PSPE…KKNQ) and 1462–1471 (KTDDDTTKLD). Composition is skewed to basic residues over residues 1542–1552 (GKGRGAKKRKT) and 1566–1578 (KAPK…KSKK). Positions 1616–1627 (ESDEDDDFDMFN) are enriched in acidic residues.

This sequence belongs to the type II topoisomerase family. Homodimer. Mg(2+) is required as a cofactor. The cofactor is Mn(2+). It depends on Ca(2+) as a cofactor.

It localises to the nucleus. The protein localises to the nucleolus. The protein resides in the nucleoplasm. It carries out the reaction ATP-dependent breakage, passage and rejoining of double-stranded DNA.. Functionally, key decatenating enzyme that alters DNA topology by binding to two double-stranded DNA molecules, generating a double-stranded break in one of the strands, passing the intact strand through the broken strand, and religating the broken strand. Plays a role in B-cell differentiation. The polypeptide is DNA topoisomerase 2-beta (TOP2B) (Gallus gallus (Chicken)).